Reading from the N-terminus, the 288-residue chain is Quinate/shikimate dehydrogenase (288 aa).

Residues K71 and D107 each contribute to the substrate site. NAD(+)-binding positions include 132 to 135 (AGGA), 155 to 158 (NRRD), K205, 232 to 235 (CVYN), and G255.

Belongs to the shikimate dehydrogenase family. Homodimer.

It catalyses the reaction L-quinate + NAD(+) = 3-dehydroquinate + NADH + H(+). The catalysed reaction is L-quinate + NADP(+) = 3-dehydroquinate + NADPH + H(+). It carries out the reaction shikimate + NADP(+) = 3-dehydroshikimate + NADPH + H(+). The enzyme catalyses shikimate + NAD(+) = 3-dehydroshikimate + NADH + H(+). Its pathway is metabolic intermediate biosynthesis; chorismate biosynthesis; chorismate from D-erythrose 4-phosphate and phosphoenolpyruvate: step 4/7. Its function is as follows. The actual biological function of YdiB remains unclear, nor is it known whether 3-dehydroshikimate or quinate represents the natural substrate. Catalyzes the reversible NAD-dependent reduction of both 3-dehydroshikimate (DHSA) and 3-dehydroquinate to yield shikimate (SA) and quinate, respectively. It can use both NAD or NADP for catalysis, however it has higher catalytic efficiency with NAD. The chain is Quinate/shikimate dehydrogenase from Escherichia coli O1:K1 / APEC.